The sequence spans 80 residues: uncharacterized protein (80 aa).

Positions 1–23 are cleaved as a signal peptide; the sequence is MKWNNMLKAAGIAVLLFSVFAYA.

This is an uncharacterized protein from Bacillus subtilis (strain 168).